A 165-amino-acid polypeptide reads, in one-letter code: Large ribosomal subunit protein uL11 (165 aa).

A Phosphoserine modification is found at S38. K40 participates in a covalent cross-link: Glycyl lysine isopeptide (Lys-Gly) (interchain with G-Cter in SUMO2). A Glycyl lysine isopeptide (Lys-Gly) (interchain with G-Cter in ubiquitin) cross-link involves residue K48. At K54 the chain carries N6-acetyllysine. K83 participates in a covalent cross-link: Glycyl lysine isopeptide (Lys-Gly) (interchain with G-Cter in ubiquitin). Residue S165 is modified to Phosphoserine.

The protein belongs to the universal ribosomal protein uL11 family. In terms of assembly, component of the large ribosomal subunit. Mature ribosomes consist of a small (40S) and a large (60S) subunit. The 40S subunit contains about 33 different proteins and 1 molecule of RNA (18S). The 60S subunit contains about 49 different proteins and 3 molecules of RNA (28S, 5.8S and 5S). In terms of processing, ubiquitinated at Lys-48 and Lys-83 by RNF14 and RNF25 in response to ribosome collisions (ribosome stalling).

It is found in the cytoplasm. Component of the large ribosomal subunit. The ribosome is a large ribonucleoprotein complex responsible for the synthesis of proteins in the cell. Binds directly to 26S ribosomal RNA. This is Large ribosomal subunit protein uL11 (RPL12) from Bos taurus (Bovine).